Consider the following 231-residue polypeptide: Cytochrome c oxidase subunit 2 (231 aa).

Over Met-1 to Ser-14 the chain is Mitochondrial intermembrane. A helical transmembrane segment spans residues Pro-15 to Met-45. The Mitochondrial matrix segment spans residues Leu-46–Gln-59. Residues Glu-60–Thr-87 traverse the membrane as a helical segment. Topologically, residues Asp-88 to Leu-231 are mitochondrial intermembrane. Cu cation-binding residues include His-161, Cys-196, Glu-198, Cys-200, His-204, and Met-207. A Mg(2+)-binding site is contributed by Glu-198.

Belongs to the cytochrome c oxidase subunit 2 family. In terms of assembly, component of the cytochrome c oxidase (complex IV, CIV), a multisubunit enzyme composed of 14 subunits. The complex is composed of a catalytic core of 3 subunits MT-CO1, MT-CO2 and MT-CO3, encoded in the mitochondrial DNA, and 11 supernumerary subunits COX4I, COX5A, COX5B, COX6A, COX6B, COX6C, COX7A, COX7B, COX7C, COX8 and NDUFA4, which are encoded in the nuclear genome. The complex exists as a monomer or a dimer and forms supercomplexes (SCs) in the inner mitochondrial membrane with NADH-ubiquinone oxidoreductase (complex I, CI) and ubiquinol-cytochrome c oxidoreductase (cytochrome b-c1 complex, complex III, CIII), resulting in different assemblies (supercomplex SCI(1)III(2)IV(1) and megacomplex MCI(2)III(2)IV(2)). Found in a complex with TMEM177, COA6, COX18, COX20, SCO1 and SCO2. Interacts with TMEM177 in a COX20-dependent manner. Interacts with COX20. Interacts with COX16. Requires Cu cation as cofactor.

It is found in the mitochondrion inner membrane. The catalysed reaction is 4 Fe(II)-[cytochrome c] + O2 + 8 H(+)(in) = 4 Fe(III)-[cytochrome c] + 2 H2O + 4 H(+)(out). Its function is as follows. Component of the cytochrome c oxidase, the last enzyme in the mitochondrial electron transport chain which drives oxidative phosphorylation. The respiratory chain contains 3 multisubunit complexes succinate dehydrogenase (complex II, CII), ubiquinol-cytochrome c oxidoreductase (cytochrome b-c1 complex, complex III, CIII) and cytochrome c oxidase (complex IV, CIV), that cooperate to transfer electrons derived from NADH and succinate to molecular oxygen, creating an electrochemical gradient over the inner membrane that drives transmembrane transport and the ATP synthase. Cytochrome c oxidase is the component of the respiratory chain that catalyzes the reduction of oxygen to water. Electrons originating from reduced cytochrome c in the intermembrane space (IMS) are transferred via the dinuclear copper A center (CU(A)) of subunit 2 and heme A of subunit 1 to the active site in subunit 1, a binuclear center (BNC) formed by heme A3 and copper B (CU(B)). The BNC reduces molecular oxygen to 2 water molecules using 4 electrons from cytochrome c in the IMS and 4 protons from the mitochondrial matrix. This chain is Cytochrome c oxidase subunit 2 (MT-CO2), found in Aotus nigriceps (Black-headed night monkey).